We begin with the raw amino-acid sequence, 258 residues long: Spectinomycin 9-adenylyltransferase (258 aa).

The catalysed reaction is spectinomycin + ATP = 9-O-adenylylspectinomycin + diphosphate. Mediates bacterial resistance to spectinomycin, is probably a spectinomycin 9-adenylyltransferase. This chain is Spectinomycin 9-adenylyltransferase, found in Campylobacter jejuni.